Here is a 603-residue protein sequence, read N- to C-terminus: 65-kDa microtubule-associated protein 7 (603 aa).

Coiled coils occupy residues lysine 48–isoleucine 79, aspartate 131–aspartate 186, and arginine 468–lysine 502. The disordered stretch occupies residues isoleucine 501–arginine 559. Serine 513 carries the phosphoserine modification. Composition is skewed to polar residues over residues arginine 515–tyrosine 526 and arginine 537–arginine 559. Position 599 is a phosphoserine (serine 599).

The protein belongs to the MAP65/ASE1 family. Forms dimer. Binds to microtubules (MT).

It localises to the nucleus. The protein resides in the cytoplasm. Its subcellular location is the cytoskeleton. It is found in the spindle pole. This chain is 65-kDa microtubule-associated protein 7 (MAP65-7), found in Arabidopsis thaliana (Mouse-ear cress).